A 242-amino-acid polypeptide reads, in one-letter code: Synaptonemal complex central element protein 1-like (242 aa).

Residues 1–24 (MAGKLKPLNVEAPEATEEAEGQAK) form a disordered region. Residues 44-181 (LEPQIEDLIS…LREVERRLHS (138 aa)) adopt a coiled-coil conformation. The segment at 206–242 (VRSAPEVGAGEGEAGPELPRARDEEDPEPPVAAPDAL) is disordered.

The protein belongs to the SYCE family.

Its function is as follows. May be involved in meiosis. In Homo sapiens (Human), this protein is Synaptonemal complex central element protein 1-like (SYCE1L).